Consider the following 297-residue polypeptide: Protein LRATD1 (297 aa).

Phosphoserine is present on Ser38. The LRAT domain occupies 138-233 (PAPEPPAPAP…CRFGKREFKA (96 aa)).

The protein belongs to the LRATD family.

It localises to the cytoplasm. May play a role in cell morphology and motility. This chain is Protein LRATD1 (LRATD1), found in Bos taurus (Bovine).